The primary structure comprises 755 residues: Metabotropic glutamate receptor-like protein B (755 aa).

A signal peptide spans 1-23; that stretch reads MKNLISIILLILIFFNYSKFVKS. 3 N-linked (GlcNAc...) asparagine glycosylation sites follow: Asn16, Asn183, and Asn273. At 24–385 the chain is on the extracellular side; the sequence is KNCKIAVLLS…VDYSSSMKLG (362 aa). Residues 386–406 traverse the membrane as a helical segment; it reads ITITSSICIFLCIISIIIVLV. At 407 to 417 the chain is on the cytoplasmic side; the sequence is FRTARIIKSAS. The chain crosses the membrane as a helical span at residues 418–438; that stretch reads PAFLFLILMGCILIFIGCIIF. Over 439-455 the chain is Extracellular; it reads SQSPNEGTCRARVWLLS. A helical membrane pass occupies residues 456 to 476; the sequence is IGYTIFLGSLLVKNWRIWLLF. Residues 477-492 lie on the Cytoplasmic side of the membrane; it reads DNPKLKKRSITNWKLY. A helical transmembrane segment spans residues 493 to 513; it reads PWVAGILAADVLILAFWQGLG. The Extracellular portion of the chain corresponds to 514–541; that stretch reads NIRSESRIGIDSLTKYQYTNVCSSNDQG. A helical membrane pass occupies residues 542–562; the sequence is SIALYILLVFHGIKLLVACFI. The Cytoplasmic segment spans residues 563–578; the sequence is SFKIKVVDIDEFNESK. Residues 579–599 form a helical membrane-spanning segment; it reads PIASSVYIITFCLFIVIPLMV. The Extracellular segment spans residues 600 to 607; sequence SPQSVTSQ. A helical transmembrane segment spans residues 608-628; the sequence is VTTICVCAIVTTLISIILLFG. Topologically, residues 629-755 are cytoplasmic; that stretch reads SKFYKMITQG…GEVEIDSNNL (127 aa). 2 disordered regions span residues 656 to 676 and 691 to 729; these read QSLE…EENG and FSSD…NIEE. Residues 694 to 710 are compositionally biased toward acidic residues; it reads DTEDDENETQQIDEEKD.

In the N-terminal section; belongs to the BMP lipoprotein family. It in the C-terminal section; belongs to the G-protein coupled receptor 3 family. GABA-B receptor subfamily.

The protein localises to the membrane. This is Metabotropic glutamate receptor-like protein B (grlB) from Dictyostelium discoideum (Social amoeba).